The sequence spans 309 residues: MELQFLGTGAGQPAKHRNVSSLVLKLLDEINEVWMFDCGEGTQRQILETTIKPRKIKKIFITHLHGDHIFGLPGFLSSRAFQASEEQTDLEIYGPVGIKSYVTNSIRISGSKLPYQIHYHEFDDTSMGKILETDKFIVYAERLAHTIFCMGYRVVQKDLEGTLDAEALRAAGVPFGPLFGKVKNGQDIELEDGTKIFAKDFISEPRKGKIITIIGDTRKTSASVRLAKDADVLVHESTYGKGDERMARNHGHSTNMQAAQIARDAGAKRLLLNHVSARFLGRDCRQMEKDAATIFENVKVVRDLEEVII.

Positions 63, 65, 67, 68, 145, 216, and 274 each coordinate Zn(2+). The Proton acceptor role is filled by aspartate 67.

This sequence belongs to the RNase Z family. In terms of assembly, homodimer. The cofactor is Zn(2+).

The enzyme catalyses Endonucleolytic cleavage of RNA, removing extra 3' nucleotides from tRNA precursor, generating 3' termini of tRNAs. A 3'-hydroxy group is left at the tRNA terminus and a 5'-phosphoryl group is left at the trailer molecule.. In terms of biological role, zinc phosphodiesterase, which displays some tRNA 3'-processing endonuclease activity. Probably involved in tRNA maturation, by removing a 3'-trailer from precursor tRNA. In Streptococcus equi subsp. zooepidemicus (strain H70), this protein is Ribonuclease Z.